The sequence spans 1006 residues: DNA polymerase (1006 aa).

Belongs to the DNA polymerase type-B family. Interacts with OPG148. Component of the Uracil-DNA glycosylase(UDG)-OPG148-polymerase complex; OPG148 and OPG116/UDG form a heterodimeric processivity factor that associates with OPG071 to form the processive polymerase holoenzyme.

It carries out the reaction DNA(n) + a 2'-deoxyribonucleoside 5'-triphosphate = DNA(n+1) + diphosphate. Functionally, catalyzes DNA synthesis. Acquires processivity by associating with a heterodimeric processivity factor comprised of the viral OPG148 and OPG116 proteins, thereby forming the DNA polymerase holoenzyme. Displays 3'- to 5' exonuclease activity. Might participate in viral DNA recombination. Does not perform OPG116/D4synthesis across an abasic site. The polypeptide is DNA polymerase (OPG071) (Homo sapiens (Human)).